The sequence spans 1395 residues: uncharacterized protein (1395 aa).

89-96 (AYKKWGKS) contributes to the ATP binding site. 2 disordered regions span residues 146 to 166 (EEKI…LSPP) and 205 to 391 (SSSS…MENR). Low complexity-rich tracts occupy residues 155-166 (GSPSPEAELSPP) and 205-222 (SSSS…TSSP). Basic and acidic residues predominate over residues 230–269 (EVTKERSSEVPTTVHEKTQSKSKNEKENKFSNGTIEEKPA). Residues 287-301 (SWSSGSSEAGSSSSG) are compositionally biased toward low complexity. The span at 313–328 (VKVRHKAREIRNKKGR) shows a compositional bias: basic residues. Basic and acidic residues predominate over residues 337-346 (KHGEKAERNI). A compositionally biased stretch (low complexity) spans 349 to 358 (GSSSSSSSGS). The segment covering 369–391 (PLKEIGRKDPGSTEGKDLYMENR) has biased composition (basic and acidic residues). Phosphoserine occurs at positions 814 and 1080. Positions 1110–1132 (PISASELSPGGGSESEFESEKDE) are disordered. Residues S1194 and S1338 each carry the phosphoserine modification. The segment covering 1346–1359 (TGERDSGAKSDGFR) has biased composition (basic and acidic residues). Positions 1346–1395 (TGERDSGAKSDGFRGKMCSSASSTSEETGSEGGGEWVGPSEEELFSRTHL) are disordered.

This is an uncharacterized protein from Homo sapiens (Human).